Consider the following 185-residue polypeptide: Small ribosomal subunit protein bS16 (185 aa).

Residues 83–185 (QWTHGNNPEK…APASEETTEG (103 aa)) form a disordered region. Positions 89–125 (NPEKAKPGKKAQERDAERTQRDADRVAAEAQAKEDAK) are enriched in basic and acidic residues. Low complexity-rich tracts occupy residues 126-146 (AAAA…AAAP) and 159-176 (VEAA…AEEA).

Belongs to the bacterial ribosomal protein bS16 family.

The protein is Small ribosomal subunit protein bS16 of Caulobacter sp. (strain K31).